Consider the following 402-residue polypeptide: uncharacterized protein (402 aa).

The signal sequence occupies residues 1 to 44 (MLEKNLLPEILLAIHMPLNKGLTRVKAIVIIIVVIIAVIAGVVG). Positions 53–79 (NSVTTSSSSTTTSSSLSSTSISSSTTN) are disordered.

It belongs to the bacterial solute-binding protein 1 family. WtpA subfamily.

This is an uncharacterized protein from Saccharolobus solfataricus (strain ATCC 35092 / DSM 1617 / JCM 11322 / P2) (Sulfolobus solfataricus).